Here is a 101-residue protein sequence, read N- to C-terminus: Small ribosomal subunit protein uS14 (101 aa).

Residues 48–69 are disordered; sequence LSKLPRDSSPSRHRSRCELSGR. The span at 51 to 68 shows a compositional bias: basic and acidic residues; sequence LPRDSSPSRHRSRCELSG.

This sequence belongs to the universal ribosomal protein uS14 family. Part of the 30S ribosomal subunit. Contacts proteins S3 and S10.

Functionally, binds 16S rRNA, required for the assembly of 30S particles and may also be responsible for determining the conformation of the 16S rRNA at the A site. In Stenotrophomonas maltophilia (strain R551-3), this protein is Small ribosomal subunit protein uS14.